Reading from the N-terminus, the 270-residue chain is DNA repair protein RecO (270 aa).

This sequence belongs to the RecO family.

Involved in DNA repair and RecF pathway recombination. This Synechococcus sp. (strain WH7803) protein is DNA repair protein RecO.